The following is a 167-amino-acid chain: CASP-like protein UU1 (167 aa).

Over 1–17 (MVELESQEAVTVASTAD) the chain is Cytoplasmic. Residues 18–38 (IAVDVSLRLLAAATSLASAVV) form a helical membrane-spanning segment. Topologically, residues 39–54 (VAANHQQRWGVRVDFT) are extracellular. The chain crosses the membrane as a helical span at residues 55–75 (LFQVWIGFVAVNLVCTVYAAA). The Cytoplasmic portion of the chain corresponds to 76–94 (TAAAARKAMGRWWLHHADA). The chain crosses the membrane as a helical span at residues 95-115 (VVVNLEAAATAGAGAIGSIAM). Topologically, residues 116–135 (WGNEASGWYAVCRLYRRYCN) are extracellular. A helical membrane pass occupies residues 136–156 (AGAAALALSLAAVLLLGVACA). Over 157–167 (RSRYPKMPPTT) the chain is Cytoplasmic.

The protein belongs to the Casparian strip membrane proteins (CASP) family. In terms of assembly, homodimer and heterodimers.

It localises to the cell membrane. This Oryza sativa subsp. indica (Rice) protein is CASP-like protein UU1.